The following is a 224-amino-acid chain: Germin-like protein 1-2 (224 aa).

An N-terminal signal peptide occupies residues 1–29; that stretch reads MASSRSVVLRVLVAVAVVAAAGAPRLAVA. Cysteine 38 and cysteine 53 are joined by a disulfide. In terms of domain architecture, Cupin type-1 spans 67–215; sequence DAIVQAPSTS…TFLMGEDEVG (149 aa). N-linked (GlcNAc...) asparagine glycosylation occurs at asparagine 82. The Mn(2+) site is built by histidine 115, histidine 117, glutamate 122, and histidine 161. N-linked (GlcNAc...) asparagine glycosylation is present at asparagine 170.

This sequence belongs to the germin family. Oligomer (believed to be a pentamer but probably hexamer).

Its subcellular location is the secreted. The protein localises to the extracellular space. It localises to the apoplast. In terms of biological role, may play a role in plant defense. Probably has no oxalate oxidase activity even if the active site is conserved. This is Germin-like protein 1-2 from Oryza sativa subsp. japonica (Rice).